Here is a 265-residue protein sequence, read N- to C-terminus: Phosphonoacetaldehyde hydrolase (265 aa).

The active-site Nucleophile is Asp-9. Residues Asp-9 and Ala-11 each contribute to the Mg(2+) site. Catalysis depends on Lys-50, which acts as the Schiff-base intermediate with substrate. Asp-184 provides a ligand contact to Mg(2+).

The protein belongs to the HAD-like hydrolase superfamily. PhnX family. In terms of assembly, homodimer. The cofactor is Mg(2+).

The catalysed reaction is phosphonoacetaldehyde + H2O = acetaldehyde + phosphate + H(+). Functionally, involved in phosphonate degradation. This chain is Phosphonoacetaldehyde hydrolase, found in Lactiplantibacillus plantarum (strain ATCC BAA-793 / NCIMB 8826 / WCFS1) (Lactobacillus plantarum).